A 233-amino-acid chain; its full sequence is Large ribosomal subunit protein uL1 (233 aa).

It belongs to the universal ribosomal protein uL1 family. In terms of assembly, part of the 50S ribosomal subunit.

Functionally, binds directly to 23S rRNA. The L1 stalk is quite mobile in the ribosome, and is involved in E site tRNA release. Its function is as follows. Protein L1 is also a translational repressor protein, it controls the translation of the L11 operon by binding to its mRNA. This Shewanella halifaxensis (strain HAW-EB4) protein is Large ribosomal subunit protein uL1.